Here is a 218-residue protein sequence, read N- to C-terminus: MSDNDELQQIAHLRREYTRGGLRRNDLPAEPLTLFERWLGQACDARLADPTAMVVATVDENGQPYQRIVLLKHYDEKGMVFYTNLGSRKAHHLENNPRISLLFPWHMLERQVMVTGKAERLSTLEVVKYFHSRPRDSQIGAWVSKQSSRISARGILESKFLELKQKFQQGEVPLPSFWGGFRVNIEQMEFWQGGEHRLHDRFLYQRENNAWKIDRLAP.

Residues 14–17 and Lys72 each bind substrate; that span reads RREY. FMN is bound by residues 67–72, 82–83, Arg88, Lys89, and Gln111; these read RIVLLK and YT. Substrate-binding residues include Tyr129, Arg133, and Ser137. FMN is bound by residues 146–147 and Trp191; that span reads QS. 197-199 contributes to the substrate binding site; sequence RLH. Arg201 lines the FMN pocket.

It belongs to the pyridoxamine 5'-phosphate oxidase family. As to quaternary structure, homodimer. It depends on FMN as a cofactor.

The catalysed reaction is pyridoxamine 5'-phosphate + O2 + H2O = pyridoxal 5'-phosphate + H2O2 + NH4(+). It catalyses the reaction pyridoxine 5'-phosphate + O2 = pyridoxal 5'-phosphate + H2O2. It functions in the pathway cofactor metabolism; pyridoxal 5'-phosphate salvage; pyridoxal 5'-phosphate from pyridoxamine 5'-phosphate: step 1/1. Its pathway is cofactor metabolism; pyridoxal 5'-phosphate salvage; pyridoxal 5'-phosphate from pyridoxine 5'-phosphate: step 1/1. Its function is as follows. Catalyzes the oxidation of either pyridoxine 5'-phosphate (PNP) or pyridoxamine 5'-phosphate (PMP) into pyridoxal 5'-phosphate (PLP). This is Pyridoxine/pyridoxamine 5'-phosphate oxidase from Citrobacter koseri (strain ATCC BAA-895 / CDC 4225-83 / SGSC4696).